The following is a 130-amino-acid chain: Small ribosomal subunit protein uS11 (130 aa).

It belongs to the universal ribosomal protein uS11 family. In terms of assembly, part of the 30S ribosomal subunit. Interacts with proteins S7 and S18. Binds to IF-3.

Its function is as follows. Located on the platform of the 30S subunit, it bridges several disparate RNA helices of the 16S rRNA. Forms part of the Shine-Dalgarno cleft in the 70S ribosome. The protein is Small ribosomal subunit protein uS11 of Xylella fastidiosa (strain 9a5c).